The sequence spans 103 residues: Large ribosomal subunit protein bL21 (103 aa).

This sequence belongs to the bacterial ribosomal protein bL21 family. Part of the 50S ribosomal subunit. Contacts protein L20.

In terms of biological role, this protein binds to 23S rRNA in the presence of protein L20. The protein is Large ribosomal subunit protein bL21 of Kineococcus radiotolerans (strain ATCC BAA-149 / DSM 14245 / SRS30216).